The chain runs to 164 residues: Lipoprotein signal peptidase (164 aa).

4 helical membrane-spanning segments follow: residues 12–32 (WLWL…LILQ), 42–62 (LFPS…SFLA), 70–90 (WFFA…MYRS), and 102–122 (ALII…GFVV). Residues aspartate 123 and aspartate 141 contribute to the active site. A helical transmembrane segment spans residues 137–157 (FNLADTAICVGAALIVLEGFL).

It belongs to the peptidase A8 family.

Its subcellular location is the cell inner membrane. The enzyme catalyses Release of signal peptides from bacterial membrane prolipoproteins. Hydrolyzes -Xaa-Yaa-Zaa-|-(S,diacylglyceryl)Cys-, in which Xaa is hydrophobic (preferably Leu), and Yaa (Ala or Ser) and Zaa (Gly or Ala) have small, neutral side chains.. Its pathway is protein modification; lipoprotein biosynthesis (signal peptide cleavage). Functionally, this protein specifically catalyzes the removal of signal peptides from prolipoproteins. The sequence is that of Lipoprotein signal peptidase from Shigella flexneri serotype 5b (strain 8401).